Here is a 172-residue protein sequence, read N- to C-terminus: Protein GrpE (172 aa).

The protein belongs to the GrpE family. Homodimer.

The protein resides in the cytoplasm. Its function is as follows. Participates actively in the response to hyperosmotic and heat shock by preventing the aggregation of stress-denatured proteins, in association with DnaK and GrpE. It is the nucleotide exchange factor for DnaK and may function as a thermosensor. Unfolded proteins bind initially to DnaJ; upon interaction with the DnaJ-bound protein, DnaK hydrolyzes its bound ATP, resulting in the formation of a stable complex. GrpE releases ADP from DnaK; ATP binding to DnaK triggers the release of the substrate protein, thus completing the reaction cycle. Several rounds of ATP-dependent interactions between DnaJ, DnaK and GrpE are required for fully efficient folding. This chain is Protein GrpE, found in Thermotoga petrophila (strain ATCC BAA-488 / DSM 13995 / JCM 10881 / RKU-1).